We begin with the raw amino-acid sequence, 285 residues long: ATP synthase gamma chain (285 aa).

Belongs to the ATPase gamma chain family. In terms of assembly, F-type ATPases have 2 components, CF(1) - the catalytic core - and CF(0) - the membrane proton channel. CF(1) has five subunits: alpha(3), beta(3), gamma(1), delta(1), epsilon(1). CF(0) has three main subunits: a, b and c.

It is found in the cell membrane. Its function is as follows. Produces ATP from ADP in the presence of a proton gradient across the membrane. The gamma chain is believed to be important in regulating ATPase activity and the flow of protons through the CF(0) complex. In Halalkalibacterium halodurans (strain ATCC BAA-125 / DSM 18197 / FERM 7344 / JCM 9153 / C-125) (Bacillus halodurans), this protein is ATP synthase gamma chain.